Consider the following 189-residue polypeptide: MLLSDRDIRKSIDAGDLGIEPFDAELIQPSSVDVRMDRYFRVFNNSKYTHIDPKLNQDELTSLVEVEDGEGFVLHPGEFVLASTLEKFTLPAHLAGRLEGKSSLGRLGLLTHSTAGFIDPGFSGYITLELSNVANLPITLWPGMKVGQLALFQMSSPAETPYGSGKLGSKYQGQRGPTPSKAYLNFPNK.

DCTP contacts are provided by residues 101–106 (KSSLGR), aspartate 119, 127–129 (TLE), glutamine 148, tyrosine 162, lysine 170, and glutamine 174. Glutamate 129 (proton donor/acceptor) is an active-site residue. The segment at 163 to 189 (GSGKLGSKYQGQRGPTPSKAYLNFPNK) is disordered.

This sequence belongs to the dCTP deaminase family. Homotrimer.

The catalysed reaction is dCTP + 2 H2O = dUMP + NH4(+) + diphosphate. Its pathway is pyrimidine metabolism; dUMP biosynthesis; dUMP from dCTP: step 1/1. Bifunctional enzyme that catalyzes both the deamination of dCTP to dUTP and the hydrolysis of dUTP to dUMP without releasing the toxic dUTP intermediate. This is dCTP deaminase, dUMP-forming from Corynebacterium glutamicum (strain R).